Consider the following 89-residue polypeptide: Small ribosomal subunit protein bS16 (89 aa).

Belongs to the bacterial ribosomal protein bS16 family.

The polypeptide is Small ribosomal subunit protein bS16 (Geobacillus stearothermophilus (Bacillus stearothermophilus)).